Consider the following 362-residue polypeptide: Apelin receptor A (362 aa).

Residues 1–34 are Extracellular-facing; that stretch reads MEPTSEYTETYDYYDTGYNDSGCDYSEWEPSYSL. A glycan (N-linked (GlcNAc...) asparagine) is linked at asparagine 19. 2 cysteine pairs are disulfide-bonded: cysteine 23-cysteine 286 and cysteine 105-cysteine 184. The chain crosses the membrane as a helical span at residues 35-55; that stretch reads IPVLYMLIFILGLSGNGVVIF. Residues 56–73 are Cytoplasmic-facing; the sequence is TVWRAKSKRRAADVYIGN. A helical transmembrane segment spans residues 74–94; that stretch reads LALADLTFVITLPLWAVYTAL. Topologically, residues 95–106 are extracellular; the sequence is GYHWPFGVALCK. Residues 107-127 form a helical membrane-spanning segment; the sequence is ISSYVVLVNMYASVFCLTCLS. The Cytoplasmic segment spans residues 128 to 149; it reads FDRYLAIVHSLSSGRLRSRATM. Residues 150-170 form a helical membrane-spanning segment; that stretch reads LASLGAIWFLSCLLAVPTLLF. Residues 171 to 211 are Extracellular-facing; it reads RTTVDDTGSNRTTCAMDFSLVTLNQDHESLWIAGLSLSSSA. N-linked (GlcNAc...) asparagine glycosylation is present at asparagine 180. A helical transmembrane segment spans residues 212 to 232; sequence LGFLLPFLAMTVCYCFIGCTV. Topologically, residues 233 to 248 are cytoplasmic; it reads TRHFSHLRKEDQKKRR. A helical membrane pass occupies residues 249-269; it reads LLKIITTLVVVFAFCWTPFHV. Over 270-284 the chain is Extracellular; the sequence is LKSMDALSYLDLAPN. A helical transmembrane segment spans residues 285–305; it reads SCGFLHFLLLAHPYATCLAYV. At 306–362 the chain is on the cytoplasmic side; it reads NSCLNPFLYAFFDLRFRSQCLCLLNLKKAMHGHMSSMSSTLSAQTQKSEVQSLATKV.

It belongs to the G-protein coupled receptor 1 family. As to expression, first expressed before epiboly in dorsal precursors. During epiboly, expressed in the enveloping layer, yolk syncytial layer and migrating mesendoderm. During segmentation stages, expressed in epithelial structures such as adaxial cells, border cells of the newly formed somites, developing lens, otic vesicles and venous vasculature.

Its subcellular location is the cell membrane. G protein-coupled receptor for peptide hormones apelin (apln) and apelin receptor early endogenous ligand (apela), that plays a role in the regulation of normal cardiovascular function and fluid homeostasis. When acting as apelin receptor, activates both G(i) protein pathway that inhibits adenylate cyclase activity, and the beta-arrestin pathway that promotes internalization of the receptor. Also functions as mechanoreceptor that is activated by pathological stimuli in a G-protein-independent fashion to induce beta-arrestin signaling, hence eliciting cardiac hypertrophy. However, the presence of apelin ligand blunts cardiac hypertrophic induction from APLNR/APJ on response to pathological stimuli. Plays a key role in early development such as gastrulation, blood vessels formation and heart morphogenesis by acting as a receptor for apela hormone, promoting endoderm and mesendoderm cell migration and regulating the migration of cells fated to become myocardial progenitors, respectively. Positively regulates angioblast migration toward the embryonic midline, i.e. the position of the future vessel formation, during vasculogenesis. May promote sinus venosus (SV)-derived endothelial cells migration into the developing heart to promote coronary blood vessel development. Required for cardiovascular development, particularly for intersomitic vein angiogenesis by acting as a receptor for apln hormone. Also plays a role in various processes in adults such as regulation of blood vessel formation, blood pressure, heart contractility, and heart failure. Acts redundantly with agtrl1b in heart development. The protein is Apelin receptor A (aplnra) of Danio rerio (Zebrafish).